A 258-amino-acid chain; its full sequence is Ribosomal RNA small subunit methyltransferase A (258 aa).

S-adenosyl-L-methionine contacts are provided by His-13, Leu-15, Gly-40, Glu-61, Asp-86, and Asn-106.

This sequence belongs to the class I-like SAM-binding methyltransferase superfamily. rRNA adenine N(6)-methyltransferase family. RsmA subfamily.

The protein localises to the cytoplasm. The enzyme catalyses adenosine(1518)/adenosine(1519) in 16S rRNA + 4 S-adenosyl-L-methionine = N(6)-dimethyladenosine(1518)/N(6)-dimethyladenosine(1519) in 16S rRNA + 4 S-adenosyl-L-homocysteine + 4 H(+). Specifically dimethylates two adjacent adenosines (A1518 and A1519) in the loop of a conserved hairpin near the 3'-end of 16S rRNA in the 30S particle. May play a critical role in biogenesis of 30S subunits. This Coxiella burnetii (strain RSA 331 / Henzerling II) protein is Ribosomal RNA small subunit methyltransferase A.